Consider the following 301-residue polypeptide: GTPase Era (301 aa).

The Era-type G domain occupies 7 to 175 (YCGFIAIVGR…AAIVRKHLPE (169 aa)). Residues 15-22 (GRPNVGKS) form a G1 region. 15–22 (GRPNVGKS) contributes to the GTP binding site. Residues 41 to 45 (QTTRH) form a G2 region. The G3 stretch occupies residues 62–65 (DTPG). Residues 62–66 (DTPGL) and 124–127 (NKVD) contribute to the GTP site. The G4 stretch occupies residues 124–127 (NKVD). The G5 stretch occupies residues 154–156 (ISA). The KH type-2 domain occupies 206–283 (LGAELPYSVT…HLELWVKVKS (78 aa)).

It belongs to the TRAFAC class TrmE-Era-EngA-EngB-Septin-like GTPase superfamily. Era GTPase family. Monomer.

The protein localises to the cytoplasm. Its subcellular location is the cell inner membrane. Functionally, an essential GTPase that binds both GDP and GTP, with rapid nucleotide exchange. Plays a role in 16S rRNA processing and 30S ribosomal subunit biogenesis and possibly also in cell cycle regulation and energy metabolism. The polypeptide is GTPase Era (Shigella dysenteriae serotype 1 (strain Sd197)).